The primary structure comprises 309 residues: 5-oxoprolinase subunit C (309 aa).

This sequence belongs to the PxpC family. Forms a complex composed of PxpA, PxpB and PxpC.

It catalyses the reaction 5-oxo-L-proline + ATP + 2 H2O = L-glutamate + ADP + phosphate + H(+). In terms of biological role, catalyzes the cleavage of 5-oxoproline to form L-glutamate coupled to the hydrolysis of ATP to ADP and inorganic phosphate. The protein is 5-oxoprolinase subunit C of Haemophilus influenzae (strain ATCC 51907 / DSM 11121 / KW20 / Rd).